The following is a 404-amino-acid chain: Cysteine desulfurase IscS (404 aa).

Residues 75 to 76 (AT), asparagine 155, glutamine 183, and 203 to 205 (SAH) each bind pyridoxal 5'-phosphate. Lysine 206 is modified (N6-(pyridoxal phosphate)lysine). Threonine 243 lines the pyridoxal 5'-phosphate pocket. Residue cysteine 328 is the Cysteine persulfide intermediate of the active site. Cysteine 328 lines the [2Fe-2S] cluster pocket.

This sequence belongs to the class-V pyridoxal-phosphate-dependent aminotransferase family. NifS/IscS subfamily. Homodimer. Forms a heterotetramer with IscU, interacts with other sulfur acceptors. Pyridoxal 5'-phosphate is required as a cofactor.

It is found in the cytoplasm. The catalysed reaction is (sulfur carrier)-H + L-cysteine = (sulfur carrier)-SH + L-alanine. Its pathway is cofactor biosynthesis; iron-sulfur cluster biosynthesis. Master enzyme that delivers sulfur to a number of partners involved in Fe-S cluster assembly, tRNA modification or cofactor biosynthesis. Catalyzes the removal of elemental sulfur atoms from cysteine to produce alanine. Functions as a sulfur delivery protein for Fe-S cluster synthesis onto IscU, an Fe-S scaffold assembly protein, as well as other S acceptor proteins. In Colwellia psychrerythraea (strain 34H / ATCC BAA-681) (Vibrio psychroerythus), this protein is Cysteine desulfurase IscS.